The primary structure comprises 1257 residues: Phosphatidylinositol 3,4,5-trisphosphate 5-phosphatase 2 (1257 aa).

The SH2 domain occupies 21-117 (WYHRDLSRAA…GLVCALLLPV (97 aa)). Residues 119–132 (GEREPDPPDDRDAS) are compositionally biased toward basic and acidic residues. The interval 119-181 (GEREPDPPDD…ESTPNGLSTV (63 aa)) is disordered. At Ser132 the chain carries Phosphoserine. Over residues 156–166 (PSSPLPAPETP) the composition is skewed to pro residues. Phosphothreonine is present on Thr165. Ser241 and Ser353 each carry phosphoserine. A Phosphotyrosine modification is found at Tyr887. The residue at position 891 (Ser891) is a Phosphoserine. The disordered stretch occupies residues 897 to 986 (TGAKSKAPSV…PPKNSFNNPA (90 aa)). Over residues 939–951 (PPPTGRPPAPPRA) the composition is skewed to pro residues. The short motif at 945–950 (PPAPPR) is the SH3-binding element. Over residues 952–966 (VPREESLNPRLKSEG) the composition is skewed to basic and acidic residues. The short motif at 984 to 987 (NPAY) is the NPXY motif element. Tyr987 bears the Phosphotyrosine mark. Residues 1004 to 1115 (SFARAPIPPT…PASTFLEEVA (112 aa)) form a disordered region. Pro residues-rich tracts occupy residues 1049-1060 (LPPPDFPPPPLP) and 1088-1104 (GPPP…PPGT). A Phosphoserine modification is found at Ser1132. 2 positions are modified to phosphotyrosine: Tyr1136 and Tyr1161. An SAM domain is found at 1195-1257 (LGEAGMGAWL…LLLDTLQLSK (63 aa)). Ser1256 bears the Phosphoserine mark.

Belongs to the inositol 1,4,5-trisphosphate 5-phosphatase family. Interacts with tyrosine phosphorylated form of SHC1. Interacts with EGFR. Upon stimulation by the EGF signaling pathway, it forms a complex with SHC1 and EGFR. Interacts with cytoskeletal protein SORBS3/vinexin, promoting its localization to the periphery of cells. Forms a complex with filamin (FLNA or FLNB), actin, GPIb (GP1BA or GP1BB) that regulates cortical and submembraneous actin. Interacts with c-Met/MET, when c-Met/MET is phosphorylated on 'Tyr-1356'. Interacts with p130Cas/BCAR1. Interacts with CENTD3/ARAP3 via its SAM domain. Interacts with c-Cbl/CBL and CAP/SORBS1. Interacts with activated EPHA2 receptor. Interacts with receptors FCGR2A. Interacts with FCGR2B. Interacts with tyrosine kinase ABL1. Interacts with tyrosine kinase TEC. Interacts with CSF1R. Interacts (via N-terminus) with SH3YL1 (via SH3 domain). Interacts (via SH2 domain) with tyrosine phosphorylated KLRC1 (via ITIM). Interacts with NEDD9/HEF1. In terms of processing, tyrosine phosphorylated by the members of the SRC family after exposure to a diverse array of extracellular stimuli such as insulin, growth factors such as EGF or PDGF, chemokines, integrin ligands and hypertonic and oxidative stress. May be phosphorylated upon IgG receptor FCGR2B-binding. Phosphorylated at Tyr-987 following cell attachment and spreading. Phosphorylated at Tyr-1161 following EGF signaling pathway stimulation.

The protein localises to the cytoplasm. The protein resides in the cytosol. Its subcellular location is the cytoskeleton. It localises to the membrane. It is found in the cell projection. The protein localises to the filopodium. The protein resides in the lamellipodium. Its subcellular location is the basal cell membrane. It localises to the nucleus. It is found in the nucleus speckle. The protein localises to the spindle pole. The enzyme catalyses a 1,2-diacyl-sn-glycero-3-phospho-(1D-myo-inositol-3,4,5-trisphosphate) + H2O = a 1,2-diacyl-sn-glycero-3-phospho-(1D-myo-inositol-3,4-bisphosphate) + phosphate. It catalyses the reaction 1,2-dioctanoyl-sn-glycero-3-phospho-(1D-myo-inositol-3,4,5-trisphosphate) + H2O = 1,2-dioctanoyl-sn-glycero-3-phospho-(1D-myo-inositol-3,4-bisphosphate) + phosphate. It carries out the reaction 1,2-dihexadecanoyl-sn-glycero-3-phospho-(1D-myo-inositol-3,4,5-trisphosphate) + H2O = 1,2-dihexadecanoyl-sn-glycero-3-phospho-(1D-myo-inositol-3,4-bisphosphate) + phosphate. Activated upon translocation to the sites of synthesis of PtdIns(3,4,5)P3 in the membrane. Enzymatic activity is enhanced in the presence of phosphatidylserine. Functionally, phosphatidylinositol (PtdIns) phosphatase that specifically hydrolyzes the 5-phosphate of phosphatidylinositol-3,4,5-trisphosphate (PtdIns(3,4,5)P3) to produce PtdIns(3,4)P2, thereby negatively regulating the PI3K (phosphoinositide 3-kinase) pathways. Required for correct mitotic spindle orientation and therefore progression of mitosis. Plays a central role in regulation of PI3K-dependent insulin signaling, although the precise molecular mechanisms and signaling pathways remain unclear. While overexpression reduces both insulin-stimulated MAP kinase and Akt activation, its absence does not affect insulin signaling or GLUT4 trafficking. Confers resistance to dietary obesity. May act by regulating AKT2, but not AKT1, phosphorylation at the plasma membrane. Part of a signaling pathway that regulates actin cytoskeleton remodeling. Required for the maintenance and dynamic remodeling of actin structures as well as in endocytosis, having a major impact on ligand-induced EGFR internalization and degradation. Participates in regulation of cortical and submembraneous actin by hydrolyzing PtdIns(3,4,5)P3 thereby regulating membrane ruffling. Regulates cell adhesion and cell spreading. Required for HGF-mediated lamellipodium formation, cell scattering and spreading. Acts as a negative regulator of EPHA2 receptor endocytosis by inhibiting via PI3K-dependent Rac1 activation. Acts as a regulator of neuritogenesis by regulating PtdIns(3,4,5)P3 level and is required to form an initial protrusive pattern, and later, maintain proper neurite outgrowth. Acts as a negative regulator of the FC-gamma-RIIA receptor (FCGR2A). Mediates signaling from the FC-gamma-RIIB receptor (FCGR2B), playing a central role in terminating signal transduction from activating immune/hematopoietic cell receptor systems. Involved in EGF signaling pathway. Upon stimulation by EGF, it is recruited by EGFR and dephosphorylates PtdIns(3,4,5)P3. Plays a negative role in regulating the PI3K-PKB pathway, possibly by inhibiting PKB activity. Down-regulates Fc-gamma-R-mediated phagocytosis in macrophages independently of INPP5D/SHIP1. In macrophages, down-regulates NF-kappa-B-dependent gene transcription by regulating macrophage colony-stimulating factor (M-CSF)-induced signaling. Plays a role in the localization of AURKA and NEDD9/HEF1 to the basolateral membrane at interphase in polarized cysts, thereby mediates cell cycle homeostasis, cell polarization and cilia assembly. Additionally promotion of cilia growth is also facilitated by hydrolysis of (PtdIns(3,4,5)P3) to PtdIns(3,4)P2. Promotes formation of apical membrane-initiation sites during the initial stages of lumen formation via Rho family-induced actin filament organization and CTNNB1 localization to cell-cell contacts. May also hydrolyze PtdIns(1,3,4,5)P4, and could thus affect the levels of the higher inositol polyphosphates like InsP6. Involved in endochondral ossification. This is Phosphatidylinositol 3,4,5-trisphosphate 5-phosphatase 2 from Rattus norvegicus (Rat).